The sequence spans 440 residues: Guanine/hypoxanthine permease PbuG (440 aa).

13 helical membrane-spanning segments follow: residues 18–38, 57–77, 81–101, 107–127, 142–162, 175–195, 201–221, 251–271, 291–311, 327–347, 354–374, 388–408, and 419–439; these read IIGG…NPIT, AVFT…GLIA, IAIA…VLGM, AALS…LTGF, AVGA…SGII, IHSG…ILMV, GVFI…LVPV, MLIV…GTLV, ALLA…STTT, GFAA…SPLL, VTAP…GKIA, MIMM…FIFY, and KEVH…FIFL.

This sequence belongs to the nucleobase:cation symporter-2 (NCS2) (TC 2.A.40) family. Azg-like subfamily.

It localises to the cell membrane. In terms of biological role, involved in the uptake of the purine bases hypoxanthine and guanine. This is Guanine/hypoxanthine permease PbuG (pbuG) from Bacillus subtilis (strain 168).